A 186-amino-acid chain; its full sequence is Transcription factor FapR (186 aa).

Positions 98-168 constitute a MaoC-like domain; it reads FTKTQIARGH…YVIEVNSYVR (71 aa).

Belongs to the FapR family.

In terms of biological role, transcriptional factor involved in regulation of membrane lipid biosynthesis by repressing genes involved in fatty acid and phospholipid metabolism. This chain is Transcription factor FapR, found in Staphylococcus haemolyticus (strain JCSC1435).